A 443-amino-acid chain; its full sequence is Methyl-coenzyme M reductase II subunit beta (443 aa).

A coenzyme M-binding site is contributed by tyrosine 367. Glycine 369 lines the coenzyme B pocket.

This sequence belongs to the methyl-coenzyme M reductase beta subunit family. MCR is a hexamer of two alpha, two beta, and two gamma chains, forming a dimer of heterotrimers. Coenzyme F430 serves as cofactor.

It carries out the reaction coenzyme B + methyl-coenzyme M = methane + coenzyme M-coenzyme B heterodisulfide. The protein operates within one-carbon metabolism; methyl-coenzyme M reduction; methane from methyl-coenzyme M: step 1/1. Functionally, component of the methyl-coenzyme M reductase (MCR) I that catalyzes the reductive cleavage of methyl-coenzyme M (CoM-S-CH3 or 2-(methylthio)ethanesulfonate) using coenzyme B (CoB or 7-mercaptoheptanoylthreonine phosphate) as reductant which results in the production of methane and the mixed heterodisulfide of CoB and CoM (CoM-S-S-CoB). This is the final step in methanogenesis. The protein is Methyl-coenzyme M reductase II subunit beta (mrtB) of Methanothermus fervidus (strain ATCC 43054 / DSM 2088 / JCM 10308 / V24 S).